The chain runs to 457 residues: Cation efflux system protein CusC (457 aa).

An N-terminal signal peptide occupies residues 1–17 (MSPCKLLPFCVALALTG). Cys-18 is lipidated: N-palmitoyl cysteine. Residue Cys-18 is the site of S-diacylglycerol cysteine attachment.

This sequence belongs to the outer membrane factor (OMF) (TC 1.B.17) family. As to quaternary structure, homotrimer. Component of the cus efflux system composed of CusA, CusB, CusC and CusF.

It localises to the cell outer membrane. Functionally, forms pores that allow passive diffusion of cations across the outer membrane. Part of a cation efflux system that mediates resistance to copper and silver. In pathogenic strains it allows the bacteria to invade brain microvascular endothelial cells (BMEC) thus allowing it to cross the blood-brain barrier and cause neonatal meningitis. This Escherichia coli (strain K12) protein is Cation efflux system protein CusC (cusC).